A 296-amino-acid polypeptide reads, in one-letter code: Small ribosomal subunit protein uS2m (296 aa).

The disordered stretch occupies residues 274 to 296 (QGQKEPGDQGPAHPPGADMSHSL).

It belongs to the universal ribosomal protein uS2 family. Component of the mitochondrial small ribosomal subunit (mt-SSU). Mature mammalian 55S mitochondrial ribosomes consist of a small (28S) and a large (39S) subunit. The 28S small subunit contains a 12S ribosomal RNA (12S mt-rRNA) and 30 different proteins. The 39S large subunit contains a 16S rRNA (16S mt-rRNA), a copy of mitochondrial valine transfer RNA (mt-tRNA(Val)), which plays an integral structural role, and 52 different proteins.

It localises to the mitochondrion. Functionally, required for mitoribosome formation and stability, and mitochondrial translation. The sequence is that of Small ribosomal subunit protein uS2m (MRPS2) from Homo sapiens (Human).